The sequence spans 712 residues: Polyribonucleotide nucleotidyltransferase (712 aa).

Residues Asp487 and Asp493 each coordinate Mg(2+). In terms of domain architecture, KH spans 554 to 613 (PRIHTMKISVEKIKDVIGKGGAVIRQLTEETGTTIEIEDDGTIKIAATDGDQAKEAIRRI). The S1 motif domain maps to 623-691 (GVIYTGKVAR…RQGRVRLSMK (69 aa)).

Belongs to the polyribonucleotide nucleotidyltransferase family. Component of the RNA degradosome, which is a multiprotein complex involved in RNA processing and mRNA degradation. The cofactor is Mg(2+).

The protein resides in the cytoplasm. It carries out the reaction RNA(n+1) + phosphate = RNA(n) + a ribonucleoside 5'-diphosphate. Involved in mRNA degradation. Catalyzes the phosphorolysis of single-stranded polyribonucleotides processively in the 3'- to 5'-direction. The chain is Polyribonucleotide nucleotidyltransferase from Vibrio cholerae serotype O1 (strain ATCC 39541 / Classical Ogawa 395 / O395).